Here is a 71-residue protein sequence, read N- to C-terminus: Large ribosomal subunit protein bL31 (71 aa).

Residues Cys16, Cys18, Cys37, and Cys40 each coordinate Zn(2+).

The protein belongs to the bacterial ribosomal protein bL31 family. Type A subfamily. In terms of assembly, part of the 50S ribosomal subunit. Zn(2+) serves as cofactor.

Functionally, binds the 23S rRNA. In Mannheimia succiniciproducens (strain KCTC 0769BP / MBEL55E), this protein is Large ribosomal subunit protein bL31.